We begin with the raw amino-acid sequence, 154 residues long: Probable prefoldin subunit 5 (154 aa).

It belongs to the prefoldin subunit alpha family. In terms of assembly, heterohexamer of two PFD-alpha type and four PFD-beta type subunits.

Its function is as follows. Binds specifically to cytosolic chaperonin (c-CPN) and transfers target proteins to it. Binds to nascent polypeptide chain and promotes folding in an environment in which there are many competing pathways for nonnative proteins. The protein is Probable prefoldin subunit 5 of Caenorhabditis briggsae.